Here is a 1119-residue protein sequence, read N- to C-terminus: Agglutinin-like protein 3 (1119 aa).

The N-terminal stretch at 1 to 17 (MLQQYTLLLIYLSVATA) is a signal peptide. Disulfide bonds link Cys73–Cys150, Cys96–Cys112, Cys205–Cys298, and Cys227–Cys256. ALS repeat units follow at residues 365 to 396 (TTITTSYVGVTTSYSTKTAPIGETATVIVDIP), 401 to 432 (TTVTSKWTGTITSTTTHTNPTDSIDTVIVQVP), and 438 to 469 (VTTTEYWSQSFATTTTITGPPGNTDTVLIREP). Asn471 carries N-linked (GlcNAc...) asparagine glycosylation. ALS repeat units lie at residues 474-505 (VTTTEYWSESYTTTSTFTAPPGGTDSVIIKEP) and 510-541 (VTTTEYWSESYTTTSTFTAPPGGTDSVIIKEP). Asn543 carries N-linked (GlcNAc...) asparagine glycosylation. One copy of the ALS 6 repeat lies at 546–577 (VTTTEYWSQSYTTTTTVTAPPGGTDTVLVREP). Residue Asn579 is glycosylated (N-linked (GlcNAc...) asparagine). 2 ALS repeats span residues 582–613 (VTTTEYWSQSYTTTTTVIAPPGGTDSVIIREP) and 618–649 (VTTTEYWSQSYATTTTITAPPGETDTVLIREP). N-linked (GlcNAc...) asparagine glycosylation is present at Asn651. One copy of the ALS 9 repeat lies at 654-685 (VTTTEYWSQSYATTTTITAPPGETDTVLIREP). N-linked (GlcNAc...) asparagine glycosylation is present at Asn687. The stretch at 690–721 (VTTTEYWSQSFATTTTVTAPPGGTDTVIIREP) is one ALS 10 repeat. N-linked (GlcNAc...) asparagine glycosylation occurs at Asn723. The ALS 11 repeat unit spans residues 726–757 (VTTTEYWSQSYATTTTITAPPGETDTVLIREP). Asn759 is a glycosylation site (N-linked (GlcNAc...) asparagine). 2 ALS repeats span residues 762–793 (VTTTEYWSQSYATTTTIIAPPGETDTVLIREP) and 798–827 (VTTTEYWSQSYTTATTVTAPPGGTDTVIIY). Asn845 is a glycosylation site (N-linked (GlcNAc...) asparagine). The tract at residues 892–1077 (MVTNTVDSTT…QYNSDTQQTT (186 aa)) is disordered. The segment covering 894-929 (TNTVDSTTTESTSQSPSGIFSESGVSVETESSTVTT) has biased composition (low complexity). Composition is skewed to polar residues over residues 930–941 (AQTNPSVPTTES) and 947–965 (TKGNNENGPYESPSTNVKS). Over residues 974–983 (TTSTAASTST) the composition is skewed to low complexity. A glycan (N-linked (GlcNAc...) asparagine) is linked at Asn987. 2 stretches are compositionally biased toward low complexity: residues 998–1022 (ASSPIISSSADETTTVTTTAESTSV) and 1035–1048 (APSATSSPSTTTTA). Asn1050 and Asn1061 each carry an N-linked (GlcNAc...) asparagine glycan. Residues 1057 to 1077 (TTSTNQSQSQSQYNSDTQQTT) show a composition bias toward low complexity. Ser1098 carries the GPI-anchor amidated serine lipid modification. The propeptide at 1099-1119 (GSVIQHSTWLCGLITLLSLFI) is removed in mature form.

This sequence belongs to the ALS family. Post-translationally, the GPI-anchor is attached to the protein in the endoplasmic reticulum and serves to target the protein to the cell surface. There, the glucosamine-inositol phospholipid moiety is cleaved off and the GPI-modified mannoprotein is covalently attached via its lipidless GPI glycan remnant to the 1,6-beta-glucan of the outer cell wall layer.

It localises to the cell membrane. It is found in the secreted. The protein resides in the cell wall. In terms of biological role, cell surface adhesion protein which mediates both yeast-to-host tissue adherence and yeast aggregation. Plays an important role in the biofilm formation and pathogenesis of C.albicans infections. Necessary for C.albicans to bind to N-cadherin on endothelial cells and E-cadherin on oral epithelial cells and subsequent endocytosis by these cells. During disseminated infection, mediates initial trafficking to the brain and renal cortex and contributes to fungal persistence in the kidneys. This is Agglutinin-like protein 3 (ALS3) from Candida albicans (Yeast).